The chain runs to 770 residues: Protein PAT1 homolog 1 (770 aa).

The interval 1–26 is disordered; the sequence is MFRYESLEDCPLDEDEDAFQGLGEED. Positions 1 to 84 are region A; interaction with DDX6/RCK; it reads MFRYESLEDC…EMDLLGDHEE (84 aa). The interval 1-397 is involved in nuclear foci localization; it reads MFRYESLEDC…HRSSHQDHLR (397 aa). The segment covering 7–26 has biased composition (acidic residues); sequence LEDCPLDEDEDAFQGLGEED. The interval 85-388 is region N; interaction with decapping machinery; it reads NLAERLSKMV…LNGAGDRGSH (304 aa). Residues 86–95 carry the Nuclear export signal motif; the sequence is LAERLSKMVI. Phosphoserine is present on Ser177. The residue at position 178 (Thr178) is a Phosphothreonine. Phosphoserine is present on residues Ser179 and Ser184. Position 194 is a phosphothreonine (Thr194). Asymmetric dimethylarginine occurs at positions 217, 223, and 263. The interval 223-397 is involved in RNA-binding; it reads RYPAPYGERM…HRSSHQDHLR (175 aa). Phosphoserine is present on Ser278. An Asymmetric dimethylarginine modification is found at Arg284. Disordered regions lie at residues 315–344 and 360–400; these read FRAF…QNLR and QHRR…RKDP. Residues 324 to 337 show a composition bias toward pro residues; the sequence is SATPPPQQHPPGPG. Residues 367 to 380 are compositionally biased toward low complexity; it reads QRQQQNRNQHRNLN. Omega-N-methylarginine is present on Arg385. Positions 385-400 are enriched in basic and acidic residues; the sequence is RGSHRSSHQDHLRKDP. The interval 389–448 is region H; sequence RSSHQDHLRKDPYANLMLQREKDWVSKIQMMQLQSTDPYLDDFYYQNYFEKLEKLSAAEE. The tract at residues 398–770 is involved in nuclear speckle localization; it reads KDPYANLMLQ…TKLQLVQGIR (373 aa). The interval 449–770 is region C; the sequence is IQGDGPKKER…TKLQLVQGIR (322 aa).

This sequence belongs to the PAT1 family. As to quaternary structure, interacts (via region A) with DDX6/RCK. Interacts (via region H and region C) with LSM1 and LSM4. Interacts (via region N) with DCP1A, DCP2, EDC3, EDC4 and XRN1. Interacts with the CCR4-NOT complex. Interacts with the Lsm-containing SMN-Sm protein complex. Interacts with EIF4ENIF1/4E-T.

The protein localises to the cytoplasm. It is found in the P-body. The protein resides in the nucleus. It localises to the PML body. Its subcellular location is the nucleus speckle. Its function is as follows. RNA-binding protein involved in deadenylation-dependent decapping of mRNAs, leading to the degradation of mRNAs. Acts as a scaffold protein that connects deadenylation and decapping machinery. Required for cytoplasmic mRNA processing body (P-body) assembly. This is Protein PAT1 homolog 1 (PATL1) from Pongo abelii (Sumatran orangutan).